The following is a 189-amino-acid chain: MDQLRRSLQDAPIIEKDGYHYFVHPISDGVPMLEPSLLREIVIKIIRKASLENVDKIVTPAAMGIHISTAVSLMTDIPLVVIRKRQYGLEGEVALFQETGYSENQMYINDVEAGDRVLVLDDVLSTGGTLKAITEALGDIGAEVEDVVAVIKKVGGENKIDASPYAVKTLINVDVVDGEVVIVDERGDG.

It belongs to the purine/pyrimidine phosphoribosyltransferase family. Archaeal HPRT subfamily.

May catalyze a purine salvage reaction, the substrate is unknown. This Halalkalicoccus jeotgali (strain DSM 18796 / CECT 7217 / JCM 14584 / KCTC 4019 / B3) protein is HGPRTase-like protein 2.